Consider the following 247-residue polypeptide: TM2 domain-containing protein 3 (247 aa).

An N-terminal signal peptide occupies residues 1 to 30; sequence MDLMMALKRVCRVLLFVTQMYVFSGRGSLS. Topologically, residues 31–179 are extracellular; the sequence is FEYSQPVAQP…RTFPKMLYCN (149 aa). 6 N-linked (GlcNAc...) asparagine glycosylation sites follow: asparagine 87, asparagine 99, asparagine 139, asparagine 155, asparagine 169, and asparagine 179. The helical transmembrane segment at 180–200 threads the bilayer; sequence WTGGYKWSTALALSITLGGFG. A TM2 domain is found at 183-231; the sequence is GYKWSTALALSITLGGFGADRFYLGQWREGLGKLFSFGGLGIWTLIDVF. Topologically, residues 201–215 are cytoplasmic; the sequence is ADRFYLGQWREGLGK. The helical transmembrane segment at 216-236 threads the bilayer; sequence LFSFGGLGIWTLIDVFLISVG. Over 237–247 the chain is Extracellular; sequence YVGPADGSLYI.

The protein belongs to the TM2 family.

The protein resides in the membrane. The protein is TM2 domain-containing protein 3 (tm2d3) of Xenopus laevis (African clawed frog).